A 415-amino-acid polypeptide reads, in one-letter code: Gamma-glutamyl phosphate reductase (415 aa).

The protein belongs to the gamma-glutamyl phosphate reductase family.

The protein resides in the cytoplasm. The catalysed reaction is L-glutamate 5-semialdehyde + phosphate + NADP(+) = L-glutamyl 5-phosphate + NADPH + H(+). It participates in amino-acid biosynthesis; L-proline biosynthesis; L-glutamate 5-semialdehyde from L-glutamate: step 2/2. Its function is as follows. Catalyzes the NADPH-dependent reduction of L-glutamate 5-phosphate into L-glutamate 5-semialdehyde and phosphate. The product spontaneously undergoes cyclization to form 1-pyrroline-5-carboxylate. The polypeptide is Gamma-glutamyl phosphate reductase (Mycobacterium bovis (strain BCG / Pasteur 1173P2)).